Here is a 519-residue protein sequence, read N- to C-terminus: Sorting nexin-2 (519 aa).

Positions 1–104 (MAAEREPPPL…EPSPAVTPVT (104 aa)) are disordered. Composition is skewed to low complexity over residues 27 to 50 (LFTS…LPAE) and 93 to 104 (SSEPSPAVTPVT). At serine 97 the chain carries Phosphoserine. Threonine 101 and threonine 104 each carry phosphothreonine. 2 positions are modified to phosphoserine: serine 117 and serine 119. The region spanning 140–269 (FDIEIGVSDP…QFLESSELPR (130 aa)) is the PX domain. A 1,2-diacyl-sn-glycero-3-phospho-(1D-myo-inositol-3-phosphate) contacts are provided by arginine 183, serine 185, lysine 211, and arginine 235. Residue serine 185 is modified to Phosphoserine. Positions 260 to 519 (QFLESSELPR…AFLPEAKAIA (260 aa)) are interaction with RhoG. Position 277 is a phosphoserine (serine 277). The segment at 278–295 (GAGILRMVNKAADAVNKM) is membrane-binding amphipathic helix. Residues 299–519 (MNESDAWFEE…AFLPEAKAIA (221 aa)) enclose the BAR domain. An N6-acetyllysine modification is found at lysine 469.

It belongs to the sorting nexin family. As to quaternary structure, predominantly forms heterodimers with BAR domain-containing sorting nexins SNX5, SNX6 and SNX32; can self-associate to form homodimers. The heterodimers are proposed to self-assemble into helical arrays on the membrane to stabilize and expand local membrane curvature underlying endosomal tubule formation. Thought to be a component of the originally described retromer complex (also called SNX-BAR retromer) which is a pentamer containing the heterotrimeric retromer cargo-selective complex (CSC), also described as vacuolar protein sorting subcomplex (VPS), and a heterodimeric membrane-deforming subcomplex formed between SNX1 or SNX2 and SNX5 or SNX6 (also called SNX-BAR subcomplex); the respective CSC and SNX-BAR subcomplexes associate with low affinity. Interacts with SNX5, SNX6, SNX32, VPS26A, VPS29, VPS35, FNBP1, KALRN, RHOG (GDP-bound form).

The protein localises to the early endosome membrane. It is found in the cell projection. It localises to the lamellipodium. In terms of biological role, involved in several stages of intracellular trafficking. Interacts with membranes containing phosphatidylinositol 3-phosphate (PtdIns(3P)) or phosphatidylinositol 3,5-bisphosphate (PtdIns(3,5)P2). Acts in part as component of the retromer membrane-deforming SNX-BAR subcomplex. The SNX-BAR retromer mediates retrograde transport of cargo proteins from endosomes to the trans-Golgi network (TGN) and is involved in endosome-to-plasma membrane transport for cargo protein recycling. The SNX-BAR subcomplex functions to deform the donor membrane into a tubular profile called endosome-to-TGN transport carrier (ETC). Can sense membrane curvature and has in vitro vesicle-to-membrane remodeling activity. Required for retrograde endosome-to-TGN transport of TGN38. Promotes KALRN- and RHOG-dependent but retromer-independent membrane remodeling such as lamellipodium formation; the function is dependent on GEF activity of KALRN. The polypeptide is Sorting nexin-2 (SNX2) (Homo sapiens (Human)).